We begin with the raw amino-acid sequence, 78 residues long: Large ribosomal subunit protein bL28 (78 aa).

The protein belongs to the bacterial ribosomal protein bL28 family.

This Thioalkalivibrio sulfidiphilus (strain HL-EbGR7) protein is Large ribosomal subunit protein bL28.